The chain runs to 233 residues: Orotidine 5'-phosphate decarboxylase (233 aa).

Substrate is bound by residues aspartate 13, lysine 35, 62 to 71 (DLKFHDIPNT), threonine 122, arginine 182, glutamine 191, glycine 211, and arginine 212. The Proton donor role is filled by lysine 64.

It belongs to the OMP decarboxylase family. Type 1 subfamily. Homodimer.

The catalysed reaction is orotidine 5'-phosphate + H(+) = UMP + CO2. It participates in pyrimidine metabolism; UMP biosynthesis via de novo pathway; UMP from orotate: step 2/2. Functionally, catalyzes the decarboxylation of orotidine 5'-monophosphate (OMP) to uridine 5'-monophosphate (UMP). The polypeptide is Orotidine 5'-phosphate decarboxylase (Pseudomonas putida (strain GB-1)).